Consider the following 393-residue polypeptide: Acetylornithine aminotransferase (393 aa).

Pyridoxal 5'-phosphate-binding positions include 95-96 and Phe-127; that span reads GA. Arg-130 is a N(2)-acetyl-L-ornithine binding site. A pyridoxal 5'-phosphate-binding site is contributed by 214 to 217; it reads DEVQ. Lys-243 is subject to N6-(pyridoxal phosphate)lysine. Ser-271 contacts N(2)-acetyl-L-ornithine. Residue Thr-272 participates in pyridoxal 5'-phosphate binding.

The protein belongs to the class-III pyridoxal-phosphate-dependent aminotransferase family. ArgD subfamily. Homodimer. It depends on pyridoxal 5'-phosphate as a cofactor.

It localises to the cytoplasm. The enzyme catalyses N(2)-acetyl-L-ornithine + 2-oxoglutarate = N-acetyl-L-glutamate 5-semialdehyde + L-glutamate. It functions in the pathway amino-acid biosynthesis; L-arginine biosynthesis; N(2)-acetyl-L-ornithine from L-glutamate: step 4/4. In Nitrosomonas europaea (strain ATCC 19718 / CIP 103999 / KCTC 2705 / NBRC 14298), this protein is Acetylornithine aminotransferase.